Here is a 206-residue protein sequence, read N- to C-terminus: MELGWLLVIGSYLLGSVSFSYIIAKKIKKVDIRQHGSGNAGATNTLRVLGVGPAVTVLLLDILKGVIAVVVTVQLTPDGDGWFAAAAGIAAIIGHNWPIYYGFRGGKGVATTIGVLASLVPLAAVLAGVIAIGSIVWTRYVSLGSLLFVTLTALLVAVLSQWFGYPVAYIYLTIIVAILSMWRHRSNIQRLLSGTENKLGRKKETT.

A run of 5 helical transmembrane segments spans residues 3–23 (LGWLLVIGSYLLGSVSFSYII), 51–71 (VGPAVTVLLLDILKGVIAVVV), 83–103 (FAAAAGIAAIIGHNWPIYYGF), 113–133 (IGVLASLVPLAAVLAGVIAIG), and 162–182 (WFGYPVAYIYLTIIVAILSMW).

Belongs to the PlsY family. As to quaternary structure, probably interacts with PlsX.

The protein localises to the cell membrane. The catalysed reaction is an acyl phosphate + sn-glycerol 3-phosphate = a 1-acyl-sn-glycero-3-phosphate + phosphate. The protein operates within lipid metabolism; phospholipid metabolism. Catalyzes the transfer of an acyl group from acyl-phosphate (acyl-PO(4)) to glycerol-3-phosphate (G3P) to form lysophosphatidic acid (LPA). This enzyme utilizes acyl-phosphate as fatty acyl donor, but not acyl-CoA or acyl-ACP. The protein is Glycerol-3-phosphate acyltransferase of Halalkalibacterium halodurans (strain ATCC BAA-125 / DSM 18197 / FERM 7344 / JCM 9153 / C-125) (Bacillus halodurans).